A 61-amino-acid chain; its full sequence is Short neurotoxin 1 (61 aa).

Cystine bridges form between cysteine 3–cysteine 23, cysteine 17–cysteine 40, cysteine 42–cysteine 53, and cysteine 54–cysteine 59.

This sequence belongs to the three-finger toxin family. Short-chain subfamily. Type I alpha-neurotoxin sub-subfamily. As to expression, expressed by the venom gland.

The protein resides in the secreted. Functionally, binds to muscle nicotinic acetylcholine receptor (nAChR) and inhibit acetylcholine from binding to the receptor, thereby impairing neuromuscular transmission. In Naja philippinensis (Philippine cobra), this protein is Short neurotoxin 1.